A 377-amino-acid polypeptide reads, in one-letter code: S-adenosylmethionine synthase (377 aa).

Position 14 (histidine 14) interacts with ATP. Residue aspartate 16 coordinates Mg(2+). Glutamate 42 contributes to the K(+) binding site. Glutamine 98 serves as a coordination point for L-methionine. Residues 98 to 108 (QSADIALGIDL) are flexible loop. ATP-binding positions include 162–164 (DMK), 228–229 (RF), aspartate 237, 243–244 (RK), alanine 260, and lysine 264. Aspartate 237 contacts L-methionine. L-methionine is bound at residue lysine 268.

The protein belongs to the AdoMet synthase family. In terms of assembly, homotetramer; dimer of dimers. Mg(2+) is required as a cofactor. Requires K(+) as cofactor.

It localises to the cytoplasm. The catalysed reaction is L-methionine + ATP + H2O = S-adenosyl-L-methionine + phosphate + diphosphate. Its pathway is amino-acid biosynthesis; S-adenosyl-L-methionine biosynthesis; S-adenosyl-L-methionine from L-methionine: step 1/1. In terms of biological role, catalyzes the formation of S-adenosylmethionine (AdoMet) from methionine and ATP. The overall synthetic reaction is composed of two sequential steps, AdoMet formation and the subsequent tripolyphosphate hydrolysis which occurs prior to release of AdoMet from the enzyme. The protein is S-adenosylmethionine synthase of Mesoplasma florum (strain ATCC 33453 / NBRC 100688 / NCTC 11704 / L1) (Acholeplasma florum).